A 421-amino-acid chain; its full sequence is Testin (421 aa).

Positions 92–199 constitute a PET domain; it reads MILTNPVAAK…GDVKLPCEMD (108 aa). The segment at 133–164 is disordered; the sequence is EKQPVAGSEGAQYRKKQLAKQLPAHDQDPSKC. Positions 155 to 164 are enriched in basic and acidic residues; the sequence is PAHDQDPSKC. LIM zinc-binding domains follow at residues 234–297, 299–359, and 362–421; these read YSCY…CDSE, PRCA…NHAV, and QGCH…KMMS.

It belongs to the prickle / espinas / testin family. Interacts via LIM domain 1 with ZYX. Interacts (via LIM domain 3) with ENAH and VASP. Interacts with ALKBH4, talin, actin, alpha-actinin, GRIP1 and PXN. Interacts (via LIM domain 2) with ACTL7A (via N-terminus). Heterodimer with ACTL7A; the heterodimer interacts with ENAH to form a heterotrimer.

It is found in the cytoplasm. The protein resides in the cell junction. It localises to the focal adhesion. Its function is as follows. Scaffold protein that may play a role in cell adhesion, cell spreading and in the reorganization of the actin cytoskeleton. Plays a role in the regulation of cell proliferation. May act as a tumor suppressor. The polypeptide is Testin (TES) (Colobus guereza (Mantled guereza)).